Here is a 1744-residue protein sequence, read N- to C-terminus: Myotubularin-related protein 5 (1744 aa).

The uDENN domain occupies 14–150; the sequence is DTVAVIVLEE…IRFLTYELVE (137 aa). Positions 165–304 constitute a cDENN domain; sequence ELGFELIPIS…YYNSLHQRLR (140 aa). The 107-residue stretch at 306–412 folds into the dDENN domain; that stretch reads VMFTTTSQED…LTRALPRRKH (107 aa). The GRAM domain occupies 787 to 871; that stretch reads KGNFDPVLAH…LYSMESFKKL (85 aa). A Myotubularin phosphatase domain is found at 996-1447; that stretch reads NAHIRYAVID…PQIHMWPFLA (452 aa). Polar residues predominate over residues 1102 to 1116; that stretch reads TGSMTGSQQTLHSKA. The tract at residues 1102-1123 is disordered; sequence TGSMTGSQQTLHSKASSNEESS. The segment at 1540–1590 adopts a Phorbol-ester/DAG-type zinc-finger fold; it reads IHELTPFTVGARPVQCCYCTNILTRWSKAVHCKKCRIHVHEGCVNRNITIG. Residues 1643-1743 form the PH domain; that stretch reads PPLCTGYLSK…WKECIEQVIR (101 aa).

Belongs to the protein-tyrosine phosphatase family. Non-receptor class myotubularin subfamily.

Functionally, probably acts as an adapter for other myotubularin-like phosphatases. This Caenorhabditis elegans protein is Myotubularin-related protein 5.